We begin with the raw amino-acid sequence, 440 residues long: C4-dicarboxylate transport protein (440 aa).

The next 8 helical transmembrane spans lie at 8–28, 40–60, 74–94, 147–167, 187–207, 221–241, 288–308, and 354–374; these read LYLQ…LFPA, FIKL…VTGI, LKGL…GLVV, GDIL…AALK, IVGF…AFTV, LIAC…GLVL, VVGL…SIYL, and AATL…LLGV. A disordered region spans residues 419-440; that stretch reads EEVEPANEPEPPAVPAGAGLHG.

The protein belongs to the dicarboxylate/amino acid:cation symporter (DAACS) (TC 2.A.23) family.

The protein localises to the cell inner membrane. Its function is as follows. Responsible for the transport of dicarboxylates such as succinate, fumarate, and malate from the periplasm across the membrane. The sequence is that of C4-dicarboxylate transport protein from Anaeromyxobacter dehalogenans (strain 2CP-1 / ATCC BAA-258).